The sequence spans 302 residues: 4-hydroxy-tetrahydrodipicolinate synthase (302 aa).

T56 provides a ligand contact to pyruvate. The active-site Proton donor/acceptor is Y145. The Schiff-base intermediate with substrate role is filled by K173. V215 lines the pyruvate pocket.

It belongs to the DapA family. In terms of assembly, homotetramer; dimer of dimers.

The protein localises to the cytoplasm. The enzyme catalyses L-aspartate 4-semialdehyde + pyruvate = (2S,4S)-4-hydroxy-2,3,4,5-tetrahydrodipicolinate + H2O + H(+). It participates in amino-acid biosynthesis; L-lysine biosynthesis via DAP pathway; (S)-tetrahydrodipicolinate from L-aspartate: step 3/4. Catalyzes the condensation of (S)-aspartate-beta-semialdehyde [(S)-ASA] and pyruvate to 4-hydroxy-tetrahydrodipicolinate (HTPA). This is 4-hydroxy-tetrahydrodipicolinate synthase from Prochlorococcus marinus (strain MIT 9515).